The following is a 129-amino-acid chain: Phosphoribosyl-AMP cyclohydrolase (129 aa).

A Mg(2+)-binding site is contributed by aspartate 76. Cysteine 77 is a binding site for Zn(2+). Aspartate 78 and aspartate 80 together coordinate Mg(2+). The Zn(2+) site is built by cysteine 97 and cysteine 104.

This sequence belongs to the PRA-CH family. In terms of assembly, homodimer. The cofactor is Mg(2+). Zn(2+) serves as cofactor.

The protein resides in the cytoplasm. The catalysed reaction is 1-(5-phospho-beta-D-ribosyl)-5'-AMP + H2O = 1-(5-phospho-beta-D-ribosyl)-5-[(5-phospho-beta-D-ribosylamino)methylideneamino]imidazole-4-carboxamide. It participates in amino-acid biosynthesis; L-histidine biosynthesis; L-histidine from 5-phospho-alpha-D-ribose 1-diphosphate: step 3/9. Functionally, catalyzes the hydrolysis of the adenine ring of phosphoribosyl-AMP. This Leptothrix cholodnii (strain ATCC 51168 / LMG 8142 / SP-6) (Leptothrix discophora (strain SP-6)) protein is Phosphoribosyl-AMP cyclohydrolase.